Here is a 120-residue protein sequence, read N- to C-terminus: MARDLEALERRKAKVRRAIRAAANGRPRLSVHRTSKHIYAQIIDDAKGETLVAASSLEKDLRSSLKTGADVEAAKAIGKLVAERATAKGVTAVVFDRGAYIYHGRVKALAEGAREGGLQF.

Belongs to the universal ribosomal protein uL18 family. In terms of assembly, part of the 50S ribosomal subunit; part of the 5S rRNA/L5/L18/L25 subcomplex. Contacts the 5S and 23S rRNAs.

Functionally, this is one of the proteins that bind and probably mediate the attachment of the 5S RNA into the large ribosomal subunit, where it forms part of the central protuberance. This Azorhizobium caulinodans (strain ATCC 43989 / DSM 5975 / JCM 20966 / LMG 6465 / NBRC 14845 / NCIMB 13405 / ORS 571) protein is Large ribosomal subunit protein uL18.